Here is a 149-residue protein sequence, read N- to C-terminus: UPF0178 protein VV1_1847 (149 aa).

It belongs to the UPF0178 family.

This Vibrio vulnificus (strain CMCP6) protein is UPF0178 protein VV1_1847.